The following is a 160-amino-acid chain: SsrA-binding protein (160 aa).

Belongs to the SmpB family.

The protein localises to the cytoplasm. Required for rescue of stalled ribosomes mediated by trans-translation. Binds to transfer-messenger RNA (tmRNA), required for stable association of tmRNA with ribosomes. tmRNA and SmpB together mimic tRNA shape, replacing the anticodon stem-loop with SmpB. tmRNA is encoded by the ssrA gene; the 2 termini fold to resemble tRNA(Ala) and it encodes a 'tag peptide', a short internal open reading frame. During trans-translation Ala-aminoacylated tmRNA acts like a tRNA, entering the A-site of stalled ribosomes, displacing the stalled mRNA. The ribosome then switches to translate the ORF on the tmRNA; the nascent peptide is terminated with the 'tag peptide' encoded by the tmRNA and targeted for degradation. The ribosome is freed to recommence translation, which seems to be the essential function of trans-translation. This Erwinia tasmaniensis (strain DSM 17950 / CFBP 7177 / CIP 109463 / NCPPB 4357 / Et1/99) protein is SsrA-binding protein.